We begin with the raw amino-acid sequence, 84 residues long: U8-theraphotoxin-Hhn1a (84 aa).

The N-terminal stretch at 1–21 (MKVVLLECLVWMMAMMELVSC) is a signal peptide. 5 disulfides stabilise this stretch: Cys23/Cys35, Cys29/Cys44, Cys34/Cys67, Cys54/Cys75, and Cys69/Cys81.

This sequence belongs to the AVIT (prokineticin) family. In terms of tissue distribution, expressed by the venom gland.

Its subcellular location is the secreted. This chain is U8-theraphotoxin-Hhn1a, found in Cyriopagopus hainanus (Chinese bird spider).